A 220-amino-acid polypeptide reads, in one-letter code: Ripening-related protein grip22 (220 aa).

A signal peptide spans 1 to 27 (MAKSALVWLASVCLVFNILSLPFLALG).

It belongs to the kiwellin family. Expressed in ripening fruits.

Its subcellular location is the secreted. This chain is Ripening-related protein grip22 (grip22), found in Vitis vinifera (Grape).